The sequence spans 428 residues: CinA-like protein (428 aa).

This sequence belongs to the CinA family.

The sequence is that of CinA-like protein from Endomicrobium trichonymphae.